Reading from the N-terminus, the 680-residue chain is Viral IRF2-like protein (680 aa).

The segment at residues serine 7–methionine 103 is a DNA-binding region (IRF tryptophan pentad repeat). Disordered stretches follow at residues serine 156 to glutamate 201, glutamate 220 to threonine 257, glutamate 343 to serine 365, and alanine 403 to serine 423. The segment covering lysine 168–serine 188 has biased composition (low complexity). Over residues glutamate 191–asparagine 200 the composition is skewed to acidic residues. A compositionally biased stretch (low complexity) spans glutamate 220–aspartate 240.

The protein belongs to the IRF family. Interacts with host EIF2AK2/PKR. Interacts with host USP7.

It is found in the host nucleus. Its subcellular location is the host cytoplasm. DNA-binding transcription factor that plays a role in the modulation of host immune response. Acts by interacting with host EIF2AK2/PKR and inhibiting its activation. In turn, EIF2AK2/PKR substrates including EIF2S1 or histone H2A are not phosphorylated. Inhibits type I interferon signaling by targeting host IRF3 during viral reactivation from latency. Attenuates the transcriptional activity of host FOXO3 via activation of the AKT1 signaling pathway, inhibiting FOXO3-mediated apoptosis. Also suppresses the expression of viral early lytic genes in both newly infected and reactivated infected host cells allowing regulation of viral life cycle by harnessing the interferon pathway. Mechanistically, promotes host PML bodies formation as well as host antiviral restriction factors IFIT1-3 expression leading to inhibition of viral early lytic proteins. Also regulates host TRAF3 and TRAF6 ubiquitination by interacting with USP7 deubiquitinase thereby influencing TRAF3/6-mediated signal transduction. This Human herpesvirus 8 type P (isolate GK18) (HHV-8) protein is Viral IRF2-like protein (vIRF-2).